We begin with the raw amino-acid sequence, 205 residues long: Riboflavin kinase (205 aa).

The tract at residues 1–24 (MRPDTSRDPVAGPDSGPEPPFPIR) is disordered. Mg(2+) is bound by residues threonine 44 and asparagine 46. Glutamate 104 functions as the Nucleophile in the catalytic mechanism.

Belongs to the flavokinase family. It depends on Zn(2+) as a cofactor. The cofactor is Mg(2+).

It catalyses the reaction riboflavin + ATP = FMN + ADP + H(+). It participates in cofactor biosynthesis; FMN biosynthesis; FMN from riboflavin (ATP route): step 1/1. Catalyzes the phosphorylation of riboflavin (vitamin B2) to form flavin mononucleotide (FMN) coenzyme. The polypeptide is Riboflavin kinase (fmn1) (Aspergillus terreus (strain NIH 2624 / FGSC A1156)).